The primary structure comprises 382 residues: Protein arginine N-methyltransferase 2 (382 aa).

2 ANK repeats span residues alanine 22–aspartate 46 and leucine 48–lysine 80. Residues lysine 134–isoleucine 382 enclose the RMT2 domain. S-adenosyl-L-methionine is bound by residues phenylalanine 143, methionine 177, phenylalanine 205 to valine 210, glutamate 228 to histidine 230, tryptophan 255 to glutamine 256, and aspartate 284.

It belongs to the class I-like SAM-binding methyltransferase superfamily. RMT2 methyltransferase family. In terms of assembly, monomer.

It is found in the cytoplasm. The protein resides in the nucleus. Functionally, S-adenosyl-L-methionine-dependent protein-arginine N-methyltransferase that methylates the delta-nitrogen atom of arginine residues to form N5-methylarginine (type IV) in target proteins. Monomethylates ribosomal protein L12. This is Protein arginine N-methyltransferase 2 from Cryptococcus neoformans var. neoformans serotype D (strain JEC21 / ATCC MYA-565) (Filobasidiella neoformans).